The chain runs to 356 residues: Leucine carboxyl methyltransferase 1 (356 aa).

Residues Arg78, Gly101, Asp127, 183-184, and Glu218 each bind S-adenosyl-L-methionine; that span reads DL.

It belongs to the methyltransferase superfamily. LCMT family.

It catalyses the reaction [phosphatase 2A protein]-C-terminal L-leucine + S-adenosyl-L-methionine = [phosphatase 2A protein]-C-terminal L-leucine methyl ester + S-adenosyl-L-homocysteine. Functionally, methylates the carboxyl group of the C-terminal leucine residue of protein phosphatase 2A catalytic subunits to form alpha-leucine ester residues. This chain is Leucine carboxyl methyltransferase 1 (PPM1), found in Cryptococcus neoformans var. neoformans serotype D (strain JEC21 / ATCC MYA-565) (Filobasidiella neoformans).